We begin with the raw amino-acid sequence, 368 residues long: Histidinol-phosphate aminotransferase (368 aa).

N6-(pyridoxal phosphate)lysine is present on K223.

It belongs to the class-II pyridoxal-phosphate-dependent aminotransferase family. Histidinol-phosphate aminotransferase subfamily. In terms of assembly, homodimer. Pyridoxal 5'-phosphate serves as cofactor.

It carries out the reaction L-histidinol phosphate + 2-oxoglutarate = 3-(imidazol-4-yl)-2-oxopropyl phosphate + L-glutamate. Its pathway is amino-acid biosynthesis; L-histidine biosynthesis; L-histidine from 5-phospho-alpha-D-ribose 1-diphosphate: step 7/9. The protein is Histidinol-phosphate aminotransferase of Rhodospirillum rubrum (strain ATCC 11170 / ATH 1.1.1 / DSM 467 / LMG 4362 / NCIMB 8255 / S1).